The chain runs to 653 residues: MCSKRELRMLMLHYSKHGECILQEIGAAFRGEHATDLLLICDGKETVRAHKLVLAAASPLIRMILEETPVLDGVTTVYFPEVQVSYFRLLLDFLYSGQVYVRSVEEYHHLQDLLALLQIKASIWKNSDGSGEGEPRKSEPLVDINRNTEGITGSSVVHQHPSRRRRSKSQDSLSGDSASGGGGTGSQAGTPKKVSVKSERHSAGSSVDGDGDRDREENLEYLDEVEEAIIKSNNNHPLHPHQHHLVAGSGGHHHHHHHHHHHRQLHQIKTRSRRSDPSANRRRSSSDPVNLSIVKQQQDVDSDDANIDVETIGTATTKTLLPPRYLDPFRTKRKAAAYYIHPADAEALKPMDHEGLLHNSPDNYVVTPHRKRRPGFHNSPAQNPPFVPSYLDDLRARSKCFLSAPPTYLPELRPGSPTSVRHAEIAAGLSNNNNSSSNNNNNNNRIRPPSADNKLAVAPFVYPWPTAALAGLPGGPSDLLGLPYVHGGGPNAETSPADLLQQMKNFENSQAELSARASAAGGGGGGSGGNGSGSGGVASGGGGGSMGGNTAVREYRCEYCGKTFGMSWNLKTHLRVHTGEKPFACRLCVAMFKQKAHLLKHLCSVHRNIINAPEAGGRYTCCFCSLVFETLQELVRHLSGHHNNLLLSKNLHE.

Residues 35–103 (TDLLLICDGK…LYSGQVYVRS (69 aa)) enclose the BTB domain. Disordered regions lie at residues 126 to 215 (NSDG…DRDR), 234 to 305 (NNHP…SDDA), 429 to 451 (LSNNNNSSSNNNNNNNRIRPPSA), and 512 to 534 (ELSARASAAGGGGGGSGGNGSGS). A compositionally biased stretch (polar residues) spans 145–157 (NRNTEGITGSSVV). Positions 251-272 (GHHHHHHHHHHHRQLHQIKTRS) are enriched in basic residues. The segment covering 286 to 299 (SDPVNLSIVKQQQD) has biased composition (polar residues). Low complexity predominate over residues 430–444 (SNNNNSSSNNNNNNN). Over residues 520–534 (AGGGGGGSGGNGSGS) the composition is skewed to gly residues. 3 C2H2-type zinc fingers span residues 555–577 (YRCEYCGKTFGMSWNLKTHLRVH), 583–606 (FACRLCVAMFKQKAHLLKHLCSVH), and 619–641 (YTCCFCSLVFETLQELVRHLSGH).

It localises to the nucleus. Functionally, transcription factor required for terminalia development. Negative regulator of the JAK/STAT pathway: represses JAK/STAT-dependent expression of ventral veins lacking (vvl) in the posterior spiracles. This is Transcription factor Ken 1 from Culex quinquefasciatus (Southern house mosquito).